The primary structure comprises 423 residues: D-tagatose-1,6-bisphosphate aldolase subunit GatZ (423 aa).

It belongs to the GatZ/KbaZ family. GatZ subfamily. In terms of assembly, forms a complex with GatY.

Its pathway is carbohydrate metabolism; D-tagatose 6-phosphate degradation; D-glyceraldehyde 3-phosphate and glycerone phosphate from D-tagatose 6-phosphate: step 2/2. Component of the tagatose-1,6-bisphosphate aldolase GatYZ that is required for full activity and stability of the Y subunit. Could have a chaperone-like function for the proper and stable folding of GatY. When expressed alone, GatZ does not show any aldolase activity. Is involved in the catabolism of galactitol. This is D-tagatose-1,6-bisphosphate aldolase subunit GatZ from Salmonella choleraesuis (strain SC-B67).